Reading from the N-terminus, the 185-residue chain is Ribosome-recycling factor (185 aa).

Belongs to the RRF family.

The protein localises to the cytoplasm. Responsible for the release of ribosomes from messenger RNA at the termination of protein biosynthesis. May increase the efficiency of translation by recycling ribosomes from one round of translation to another. This chain is Ribosome-recycling factor, found in Clostridium botulinum (strain Eklund 17B / Type B).